We begin with the raw amino-acid sequence, 340 residues long: MSSTAIVHDDDLMEPTLQSIVNQKTLRWIFVGGKGGVGKTTTSCSLAIQLAKARKSVLLISTDPAHNLSDAFGQKFGKEARLVDGFTNLSAMEVDPNGSLQDLLANGEGQGDDPMAGLGVGNMMQDLAFSIPGVDEAMSFAEVLKQVKSLSYEVIVFDTAPTGHTLRFLQFPTVLEKALAKLSQLSSQFGPMLNSILGARGGLPGGQNLDELLQKMESLRETIGEVNTQFKNPDMTTFVCVCIAEFLSLYETERMIQELTSYQIDTHAIVVNQLLFPKQGSDCEQCNARRKMQKKYLEQIEELYEDFNVVRMPLLVEEVRGKEKLEKFSDMLINPYVPPN.

ATP is bound at residue 34–41 (KGGVGKTT). The active site involves D63. Residues E245 and N272 each contribute to the ATP site. C283 and C286 together coordinate Zn(2+).

Belongs to the arsA ATPase family. As to quaternary structure, homodimer.

Its subcellular location is the cytoplasm. The protein resides in the endoplasmic reticulum. Its function is as follows. ATPase required for the post-translational delivery of tail-anchored (TA) proteins to the endoplasmic reticulum. Recognizes and selectively binds the transmembrane domain of TA proteins in the cytosol. This complex then targets to the endoplasmic reticulum by membrane-bound receptors, where the tail-anchored protein is released for insertion. This process is regulated by ATP binding and hydrolysis. ATP binding drives the homodimer towards the closed dimer state, facilitating recognition of newly synthesized TA membrane proteins. ATP hydrolysis is required for insertion. Subsequently, the homodimer reverts towards the open dimer state, lowering its affinity for the membrane-bound receptor, and returning it to the cytosol to initiate a new round of targeting. This chain is ATPase get3 (get3), found in Emericella nidulans (strain FGSC A4 / ATCC 38163 / CBS 112.46 / NRRL 194 / M139) (Aspergillus nidulans).